Here is a 467-residue protein sequence, read N- to C-terminus: Probable citrate synthase 2, mitochondrial (467 aa).

Catalysis depends on residues His-303, His-349, and Asp-404.

This sequence belongs to the citrate synthase family. Homodimer.

It localises to the mitochondrion matrix. It catalyses the reaction oxaloacetate + acetyl-CoA + H2O = citrate + CoA + H(+). It participates in carbohydrate metabolism; tricarboxylic acid cycle; isocitrate from oxaloacetate: step 1/2. The chain is Probable citrate synthase 2, mitochondrial from Aedes aegypti (Yellowfever mosquito).